Reading from the N-terminus, the 129-residue chain is Fluoride-specific ion channel FluC (129 aa).

The next 4 helical transmembrane spans lie at 8–28, 34–54, 70–90, and 102–122; these read ILLV…VALW, AVFP…IGFI, IFLV…MIEH, and AALY…LGII. Na(+) is bound by residues Gly-78 and Thr-81.

The protein belongs to the fluoride channel Fluc/FEX (TC 1.A.43) family.

The protein localises to the cell inner membrane. The catalysed reaction is fluoride(in) = fluoride(out). Its activity is regulated as follows. Na(+) is not transported, but it plays an essential structural role and its presence is essential for fluoride channel function. Fluoride-specific ion channel. Important for reducing fluoride concentration in the cell, thus reducing its toxicity. The polypeptide is Fluoride-specific ion channel FluC (Chlorobium chlorochromatii (strain CaD3)).